The primary structure comprises 702 residues: Polyribonucleotide nucleotidyltransferase 2 (702 aa).

Mg(2+) contacts are provided by aspartate 483 and aspartate 489. The 60-residue stretch at 550 to 609 folds into the KH domain; it reads PQVTKLKVHPDKVREVIGAGGKVINKIIDETGVKINIENDGTIYIAAPDQESARVALEMI. Residues 619–687 enclose the S1 motif domain; the sequence is GEVYTGKVIK…PQGKIGLSRK (69 aa).

The protein belongs to the polyribonucleotide nucleotidyltransferase family. Requires Mg(2+) as cofactor.

The protein localises to the cytoplasm. The enzyme catalyses RNA(n+1) + phosphate = RNA(n) + a ribonucleoside 5'-diphosphate. Involved in mRNA degradation. Catalyzes the phosphorolysis of single-stranded polyribonucleotides processively in the 3'- to 5'-direction. This is Polyribonucleotide nucleotidyltransferase 2 from Alkaliphilus metalliredigens (strain QYMF).